Consider the following 426-residue polypeptide: 3-phosphoshikimate 1-carboxyvinyltransferase (426 aa).

Residues Lys22, Ser23, and Arg27 each coordinate 3-phosphoshikimate. Phosphoenolpyruvate is bound at residue Lys22. Phosphoenolpyruvate is bound by residues Gly96 and Arg124. 7 residues coordinate 3-phosphoshikimate: Ser170, Ser171, Gln172, Ser198, Asp314, Asn337, and Lys341. Gln172 is a binding site for phosphoenolpyruvate. Asp314 acts as the Proton acceptor in catalysis. Residues Arg345, Arg387, and Lys412 each contribute to the phosphoenolpyruvate site.

It belongs to the EPSP synthase family. Monomer.

The protein localises to the cytoplasm. The enzyme catalyses 3-phosphoshikimate + phosphoenolpyruvate = 5-O-(1-carboxyvinyl)-3-phosphoshikimate + phosphate. It functions in the pathway metabolic intermediate biosynthesis; chorismate biosynthesis; chorismate from D-erythrose 4-phosphate and phosphoenolpyruvate: step 6/7. In terms of biological role, catalyzes the transfer of the enolpyruvyl moiety of phosphoenolpyruvate (PEP) to the 5-hydroxyl of shikimate-3-phosphate (S3P) to produce enolpyruvyl shikimate-3-phosphate and inorganic phosphate. This Colwellia psychrerythraea (strain 34H / ATCC BAA-681) (Vibrio psychroerythus) protein is 3-phosphoshikimate 1-carboxyvinyltransferase.